A 332-amino-acid chain; its full sequence is Phosphate acetyltransferase (332 aa).

It belongs to the phosphate acetyltransferase and butyryltransferase family.

The protein resides in the cytoplasm. It catalyses the reaction acetyl-CoA + phosphate = acetyl phosphate + CoA. The protein operates within metabolic intermediate biosynthesis; acetyl-CoA biosynthesis; acetyl-CoA from acetate: step 2/2. This Acetivibrio thermocellus (strain ATCC 27405 / DSM 1237 / JCM 9322 / NBRC 103400 / NCIMB 10682 / NRRL B-4536 / VPI 7372) (Clostridium thermocellum) protein is Phosphate acetyltransferase (pta).